Here is a 151-residue protein sequence, read N- to C-terminus: Mini-ribonuclease 3 (151 aa).

Aspartate 28 is a catalytic residue.

This sequence belongs to the MrnC RNase family. In terms of assembly, homodimer. Mg(2+) is required as a cofactor.

The protein resides in the cytoplasm. Functionally, involved in correct processing of both the 5' and 3' ends of 23S rRNA precursor. Processes 30S rRNA precursor transcript even in absence of ribonuclease 3 (Rnc); Rnc processes 30S rRNA into smaller rRNA precursors. The sequence is that of Mini-ribonuclease 3 from Clostridium tetani (strain Massachusetts / E88).